A 404-amino-acid chain; its full sequence is Cysteine desulfurase IscS (404 aa).

Pyridoxal 5'-phosphate contacts are provided by residues 75–76 (AT), Asn155, Gln183, and 203–205 (SAH). Lys206 carries the N6-(pyridoxal phosphate)lysine modification. Thr243 contributes to the pyridoxal 5'-phosphate binding site. Residue Cys328 is the Cysteine persulfide intermediate of the active site. Residue Cys328 participates in [2Fe-2S] cluster binding.

This sequence belongs to the class-V pyridoxal-phosphate-dependent aminotransferase family. NifS/IscS subfamily. As to quaternary structure, homodimer. Forms a heterotetramer with IscU, interacts with other sulfur acceptors. Pyridoxal 5'-phosphate serves as cofactor.

It is found in the cytoplasm. It carries out the reaction (sulfur carrier)-H + L-cysteine = (sulfur carrier)-SH + L-alanine. It participates in cofactor biosynthesis; iron-sulfur cluster biosynthesis. Master enzyme that delivers sulfur to a number of partners involved in Fe-S cluster assembly, tRNA modification or cofactor biosynthesis. Catalyzes the removal of elemental sulfur atoms from cysteine to produce alanine. Functions as a sulfur delivery protein for Fe-S cluster synthesis onto IscU, an Fe-S scaffold assembly protein, as well as other S acceptor proteins. This is Cysteine desulfurase IscS from Vibrio cholerae serotype O1 (strain M66-2).